The chain runs to 190 residues: Holliday junction branch migration complex subunit RuvA (190 aa).

The interval 1–64 (MIGSLTGIIE…DNLTQLYGFL (64 aa)) is domain I. Residues 65 to 142 (DKQEQDYMRM…KMPIEETLII (78 aa)) form a domain II region. K143 is a region of interest (flexible linker). The segment at 143–190 (KEDDSLAALISLGYDKLKAFNAIQEIKANFPDDSIQEIIRKALQKLSQ) is domain III.

This sequence belongs to the RuvA family. In terms of assembly, homotetramer. Forms an RuvA(8)-RuvB(12)-Holliday junction (HJ) complex. HJ DNA is sandwiched between 2 RuvA tetramers; dsDNA enters through RuvA and exits via RuvB. An RuvB hexamer assembles on each DNA strand where it exits the tetramer. Each RuvB hexamer is contacted by two RuvA subunits (via domain III) on 2 adjacent RuvB subunits; this complex drives branch migration. In the full resolvosome a probable DNA-RuvA(4)-RuvB(12)-RuvC(2) complex forms which resolves the HJ.

It localises to the cytoplasm. In terms of biological role, the RuvA-RuvB-RuvC complex processes Holliday junction (HJ) DNA during genetic recombination and DNA repair, while the RuvA-RuvB complex plays an important role in the rescue of blocked DNA replication forks via replication fork reversal (RFR). RuvA specifically binds to HJ cruciform DNA, conferring on it an open structure. The RuvB hexamer acts as an ATP-dependent pump, pulling dsDNA into and through the RuvAB complex. HJ branch migration allows RuvC to scan DNA until it finds its consensus sequence, where it cleaves and resolves the cruciform DNA. The sequence is that of Holliday junction branch migration complex subunit RuvA from Ehrlichia chaffeensis (strain ATCC CRL-10679 / Arkansas).